The primary structure comprises 351 residues: UDP-3-O-acylglucosamine N-acyltransferase (351 aa).

The active-site Proton acceptor is the H240.

It belongs to the transferase hexapeptide repeat family. LpxD subfamily. In terms of assembly, homotrimer.

The enzyme catalyses a UDP-3-O-[(3R)-3-hydroxyacyl]-alpha-D-glucosamine + a (3R)-hydroxyacyl-[ACP] = a UDP-2-N,3-O-bis[(3R)-3-hydroxyacyl]-alpha-D-glucosamine + holo-[ACP] + H(+). Its pathway is bacterial outer membrane biogenesis; LPS lipid A biosynthesis. Functionally, catalyzes the N-acylation of UDP-3-O-acylglucosamine using 3-hydroxyacyl-ACP as the acyl donor. Is involved in the biosynthesis of lipid A, a phosphorylated glycolipid that anchors the lipopolysaccharide to the outer membrane of the cell. This is UDP-3-O-acylglucosamine N-acyltransferase from Pseudomonas savastanoi pv. phaseolicola (strain 1448A / Race 6) (Pseudomonas syringae pv. phaseolicola (strain 1448A / Race 6)).